Here is a 350-residue protein sequence, read N- to C-terminus: C5a anaphylatoxin chemotactic receptor 1 (350 aa).

Residues methionine 1–aspartate 37 are Extracellular-facing. N-linked (GlcNAc...) asparagine glycosylation is present at asparagine 5. Residues aspartate 10–aspartate 18 are required for CHIPS binding. Sulfotyrosine occurs at positions 11 and 14. Positions aspartate 21–serine 30 are involved in C5a binding. A helical membrane pass occupies residues isoleucine 38–phenylalanine 64. The Cytoplasmic portion of the chain corresponds to glutamate 65–threonine 69. The helical transmembrane segment at isoleucine 70–phenylalanine 93 threads the bilayer. Residues threonine 94–serine 110 lie on the Extracellular side of the membrane. Cysteines 109 and 188 form a disulfide. A helical transmembrane segment spans residues isoleucine 111 to alanine 132. Residues aspartate 133–alanine 153 are Cytoplasmic-facing. A helical membrane pass occupies residues tryptophan 154–tyrosine 174. Topologically, residues arginine 175 to arginine 200 are extracellular. A helical membrane pass occupies residues alanine 201 to leucine 226. At leucine 227–lysine 242 the chain is on the cytoplasmic side. The helical transmembrane segment at valine 243 to methionine 265 threads the bilayer. Residues serine 266–aspartate 282 are Extracellular-facing. Residues serine 283–alanine 303 traverse the membrane as a helical segment. Residues glycine 304 to valine 350 lie on the Cytoplasmic side of the membrane. Phosphoserine is present on residues serine 314, serine 317, serine 327, serine 332, serine 334, and serine 338.

It belongs to the G-protein coupled receptor 1 family. In terms of assembly, homodimer. May also form higher-order oligomers. Interacts (when phosphorylated) with ARRB1 and ARRB2; the interaction is associated with internalization of C5aR. Interacts (via N-terminal domain) with S.aureus chemotaxis inhibitory protein (CHIPS); the interaction blocks the receptor and may thus inhibit the immune response. Post-translationally, sulfation plays a critical role in the association of C5aR with C5a, but no significant role in the ability of the receptor to transduce a signal and mobilize calcium in response to a small a small peptide agonist. Sulfation at Tyr-14 is important for CHIPS binding. Phosphorylated on serine residues in response to C5a binding, resulting in internalization of the receptor and short-term desensitization to the ligand. The key residues involved in this process are Ser-334 and Ser-338.

It localises to the cell membrane. It is found in the cytoplasmic vesicle. Its function is as follows. Receptor for the chemotactic and inflammatory peptide anaphylatoxin C5a. The ligand interacts with at least two sites on the receptor: a high-affinity site on the extracellular N-terminus, and a second site in the transmembrane region which activates downstream signaling events. Receptor activation stimulates chemotaxis, granule enzyme release, intracellular calcium release and superoxide anion production. This is C5a anaphylatoxin chemotactic receptor 1 (C5AR1) from Homo sapiens (Human).